A 429-amino-acid polypeptide reads, in one-letter code: E3 ubiquitin-protein ligase ZNRF4 (429 aa).

Residues 1 to 27 (MPLCRPEHLMPRASRVPVAASLPLSHA) form the signal peptide. At 28–250 (VIPTQLPSRP…PPCHDLGCHP (223 aa)) the chain is on the lumenal side. The interval 30 to 67 (PTQLPSRPGHRPPGRPRRCPKASCLPPPVGPSSTQTAK) is disordered. A compositionally biased stretch (basic residues) spans 37-49 (PGHRPPGRPRRCP). Asn107, Asn152, and Asn229 each carry an N-linked (GlcNAc...) asparagine glycan. The PA domain maps to 151–223 (GNRSLGAIVL…VSEAASQDLR (73 aa)). A helical membrane pass occupies residues 251-271 (VLTVSWVLGCTLALVVSAFFV). Residues 272-429 (LNHLWLWAQA…SSAPPEAPGQ (158 aa)) lie on the Cytoplasmic side of the membrane. The RING-type; atypical zinc-finger motif lies at 309-352 (CAICLDEYEEGDQLKILPCSHTYHCKCIDPWFSQAPRRSCPVCK).

As to quaternary structure, interacts with CANX.

Its subcellular location is the endoplasmic reticulum membrane. It carries out the reaction S-ubiquitinyl-[E2 ubiquitin-conjugating enzyme]-L-cysteine + [acceptor protein]-L-lysine = [E2 ubiquitin-conjugating enzyme]-L-cysteine + N(6)-ubiquitinyl-[acceptor protein]-L-lysine.. The protein operates within protein modification; protein ubiquitination. In terms of biological role, E3 ubiquitin-protein ligase that acts as a negative regulator of NOD2 signaling by mediating ubiquitination and degradation of RIPK2. Also catalyzes ubiquitination and proteasomal degradation of CANX within the endoplasmic reticulum. Could have a role in spermatogenesis. This is E3 ubiquitin-protein ligase ZNRF4 from Homo sapiens (Human).